The primary structure comprises 279 residues: uncharacterized protein (279 aa).

The tract at residues 136–279 (TSNATEASEK…FTSDSSDEED (144 aa)) is disordered. Positions 228–238 (NNGNGAVYSDS) are enriched in low complexity.

This is an uncharacterized protein from Invertebrate iridescent virus 3 (IIV-3).